We begin with the raw amino-acid sequence, 475 residues long: Tetratricopeptide repeat protein 29 (475 aa).

TPR repeat units follow at residues 92–131 (DALR…EDAE), 136–173 (FEDV…AQLI), 182–215 (AEAH…TQGR), 234–267 (LRTY…AKEG), 274–307 (AEAS…STDL), 314–347 (GRGY…ARNN), and 354–387 (VRAS…TVEL). The disordered stretch occupies residues 437 to 475 (IEPDPVTEEFRGSTVEAVSQNSERLEELSRFPGDQKNET). Residues 459–475 (ERLEELSRFPGDQKNET) are compositionally biased toward basic and acidic residues.

As to expression, expressed in spermatozoa (at protein level).

The protein localises to the cytoplasm. It localises to the cytoskeleton. It is found in the flagellum axoneme. In terms of biological role, axonemal protein which is implicated in axonemal and/or peri-axonemal structure assembly and regulates flagellum assembly and beating and therefore sperm motility. This is Tetratricopeptide repeat protein 29 (TTC29) from Homo sapiens (Human).